We begin with the raw amino-acid sequence, 142 residues long: Multiprotein-bridging factor 1b (142 aa).

Residues 49–75 (NAGSNKAASSGTSLNTKKLDDDTENLS) form a disordered region. The span at 50 to 64 (AGSNKAASSGTSLNT) shows a compositional bias: polar residues. A compositionally biased stretch (basic and acidic residues) spans 65 to 75 (KKLDDDTENLS). The 55-residue stretch at 87-141 (IMQARGEKKLTQSQLAHLINEKPQVIQEYESGKAIPNQQILSKLERALGAKLRGK) folds into the HTH cro/C1-type domain. The H-T-H motif DNA-binding region spans 98-117 (QSQLAHLINEKPQVIQEYES).

Belongs to the MBF1 family. Expressed in leaves, roots, stems, petioles and shoots. Higher expression in flowers and siliques. Detected in leaf veins through development.

It localises to the nucleus. The protein resides in the nucleolus. In terms of biological role, transcriptional coactivator that stimulates transcriptional activity by bridging regulatory proteins and TBP, thereby recruiting TBP to promoters occupied by DNA-binding regulators. The protein is Multiprotein-bridging factor 1b (MBF1B) of Arabidopsis thaliana (Mouse-ear cress).